Here is a 440-residue protein sequence, read N- to C-terminus: Suppressor of cytokine signaling 4 (440 aa).

Residues 1–11 are compositionally biased toward polar residues; it reads MAENSESNSKN. The segment at 1-29 is disordered; sequence MAENSESNSKNVDVRPKTSRSRSADRKDG. Residues 12 to 29 show a composition bias toward basic and acidic residues; that stretch reads VDVRPKTSRSRSADRKDG. The 96-residue stretch at 286-381 folds into the SH2 domain; sequence CYWGVMDKYA…FFEPLLSTPL (96 aa). The SOCS box domain occupies 376-425; sequence LLSTPLIRTFPFSLQHICRTVICNCTTYDGIDALPIPSSMKLYLKEYHYK.

Its pathway is protein modification; protein ubiquitination. SOCS family proteins form part of a classical negative feedback system that regulates cytokine signal transduction. Substrate-recognition component of a SCF-like ECS (Elongin BC-CUL2/5-SOCS-box protein) E3 ubiquitin-protein ligase complex which mediates the ubiquitination and subsequent proteasomal degradation of target proteins. Inhibits EGF signaling by mediating the degradation of the Tyr-phosphorylated EGF receptor/EGFR. This chain is Suppressor of cytokine signaling 4 (SOCS4), found in Bos taurus (Bovine).